We begin with the raw amino-acid sequence, 388 residues long: tRNA-specific 2-thiouridylase MnmA (388 aa).

ATP-binding positions include Gly26 to Ser33 and Leu52. Cys113 acts as the Nucleophile in catalysis. Cys113 and Cys223 form a disulfide bridge. Gly138 contacts ATP. The segment at Lys173 to Gln175 is interaction with tRNA. Catalysis depends on Cys223, which acts as the Cysteine persulfide intermediate. The tract at residues Arg328 to Tyr329 is interaction with tRNA.

It belongs to the MnmA/TRMU family.

Its subcellular location is the cytoplasm. It carries out the reaction S-sulfanyl-L-cysteinyl-[protein] + uridine(34) in tRNA + AH2 + ATP = 2-thiouridine(34) in tRNA + L-cysteinyl-[protein] + A + AMP + diphosphate + H(+). Functionally, catalyzes the 2-thiolation of uridine at the wobble position (U34) of tRNA, leading to the formation of s(2)U34. This Prochlorococcus marinus (strain NATL2A) protein is tRNA-specific 2-thiouridylase MnmA.